Reading from the N-terminus, the 50-residue chain is Large ribosomal subunit protein bL33 (50 aa).

It belongs to the bacterial ribosomal protein bL33 family.

This chain is Large ribosomal subunit protein bL33, found in Hydrogenovibrio crunogenus (strain DSM 25203 / XCL-2) (Thiomicrospira crunogena).